A 379-amino-acid polypeptide reads, in one-letter code: Putative acetyl-CoA C-acetyltransferase VraB (379 aa).

The active-site Acyl-thioester intermediate is the cysteine 86. Catalysis depends on histidine 338, which acts as the Proton acceptor.

This sequence belongs to the thiolase-like superfamily. Thiolase family.

The sequence is that of Putative acetyl-CoA C-acetyltransferase VraB (vraB) from Staphylococcus aureus (strain MSSA476).